Consider the following 209-residue polypeptide: Inducible T-cell costimulator (209 aa).

The N-terminal stretch at 1–19 (MKSDLRYFFLFCIQVEILA) is a signal peptide. Residues 20-141 (GEFNDSAASE…YESELCCQLK (122 aa)) lie on the Extracellular side of the membrane. A glycan (N-linked (GlcNAc...) asparagine) is linked at N23. Residues 30 to 133 (MFIFHNGGVQ…LSREYLNIYE (104 aa)) enclose the Ig-like V-type domain. 2 cysteine pairs are disulfide-bonded: C42–C109 and C63–C83. N89 carries an N-linked (GlcNAc...) asparagine glycan. The helical transmembrane segment at 142 to 162 (FWLPIGCAAFVTVCVFGCVLM) threads the bilayer.

As to quaternary structure, homodimer; disulfide-linked. Interacts with ICOSLG. Interacts with PIK3R1. Interacts with TBK1; this interaction is critical for the maturation of T follicular regulatory cells. Post-translationally, N-glycosylated.

The protein localises to the cell membrane. Functionally, stimulatory receptor expressed in activated or antigen-experienced T-cells that plays an important role in the immune response. Upon binding to its ligand ICOSL expressed on antigen presenting cells (APCs), delivers costimulatory signals that enhances all basic T-cell responses to a foreign antigen, namely proliferation, secretion of lymphokines including IL10, up-regulation of molecules that mediate cell-cell interaction, and effective help for antibody secretion by B-cells. Also acts as a costimulatory receptor critical for the differentiation of T follicular regulatory cells upon immune challenges such as viral infection. Mechanistically, potentiates TCR-induced calcium flux by augmenting PLCG1 activation and actin remodeling. In addition, activates PI3K signaling pathways independently of calcium flux. Essential both for efficient interaction between T and B-cells and for normal antibody responses to T-cell dependent antigens. Prevents the apoptosis of pre-activated T-cells. Plays a critical role in CD40-mediated class switching of immunoglobin isotypes. This is Inducible T-cell costimulator (ICOS) from Bos taurus (Bovine).